An 807-amino-acid polypeptide reads, in one-letter code: FAD-linked oxidoreductase pytB (807 aa).

The N-terminal stretch at 1–18 is a signal peptide; the sequence is MRFLGIAAVATFSTVVSA. N-linked (GlcNAc...) asparagine glycans are attached at residues Asn-45, Asn-106, Asn-120, Asn-242, Asn-295, Asn-351, Asn-419, and Asn-699. Positions 60–231 constitute an FAD-binding PCMH-type domain; sequence FDELPVLLAY…VEFTLSLTSI (172 aa).

This sequence belongs to the oxygen-dependent FAD-linked oxidoreductase family. FAD serves as cofactor.

The protein operates within secondary metabolite biosynthesis. FAD-linked oxidoreductase; part of the gene cluster that mediates the biosynthesis of pyranterreones, a family of antioxidative compounds. The first step of pyranonigrins biosynthesis is performed by the hybrid PKS-NRPS synthetase pytA that condenses 4 malonyl-CoA units ato the acetyl starter unit by the modular PKS of pytA. The acyl chain is then connected to an L-serine through the amide bond by the modular NRPS of pytA. A tetramic acid is formed and released from the PKS-NRPS pytA to give pyranterreone 5 with the help of the thioesterase pytI. Pyranterreone 5 could be methylated by pytC to afford pyranterreone 6. Both pyranterreones 5 and 6 are subsequently oxidized by the FAD-linked oxidoreductase pytB and the cytochrome P450 monooxygenase pytD to form the fused gamma-pyrone core, resulting in pyranterreones 7 and 11, respectively. The hydroxy group at C-8 of pyranterreones 7 and 11 are dehydrated by the aspartyl protease pytH to form a delta-7 double bond to give pyranterreones 3 and 1, 2 accordingly. The exo-methylene of pyranterreone 3 could be reduced into a pendant methyl by reductase pytE to provide pyranterreone 4, also known as cordylactam. Pyranterreone 4 can be reconverted to pyranterreone 3 through pytB-catalyzed dehydrogenation or further oxidized to pyranterreones 9 and 10. The chain is FAD-linked oxidoreductase pytB from Aspergillus terreus (strain NIH 2624 / FGSC A1156).